The primary structure comprises 266 residues: Agamous-like MADS-box protein AGL97 (266 aa).

The region spanning 3-63 (GVKRKIAIEK…SNSNAAFYSF (61 aa)) is the MADS-box domain. The stretch at 88 to 130 (WEDESLLKSENLEELREAMDSMSTMLRDLKELEKQRDHQTQTL) forms a coiled coil.

As to quaternary structure, interacts with AGL27 and AGL62.

It localises to the nucleus. In terms of biological role, putative transcription factor. The protein is Agamous-like MADS-box protein AGL97 (AGL97) of Arabidopsis thaliana (Mouse-ear cress).